The primary structure comprises 109 residues: Mannose-specific lectin (109 aa).

The Bulb-type lectin domain maps to 25 to 109 (MQEDCNLVLY…ARWATGTNIH (85 aa)). Residues Gln26, Asp28, Asn30, Tyr34, Asp37, Lys38, Trp41, Ala42, Asn44, Gln57, Asp59, Asn61, Tyr65, Ile72, Trp73, Asn76, Asn83, Gln89, Asp91, Asn93, Tyr97, and Trp102 each coordinate alpha-D-mannopyranose. Residues Cys29 and Cys52 are joined by a disulfide bond.

In terms of assembly, homotetramer; antiparallel. Detected in bulbs (at protein level).

It is found in the secreted. Its activity is regulated as follows. Strongly inhibited by alpha-1,6-linked mannotriose. Inhibited by various oligosaccharides of P.pastoris mannan including, Man(alpha-l,6)Man-alpha-O-Me, Man(alpha-l,2)Man, Man(alpha-l,3)Man-alpha-O-Me, Man(alpha-l,2)Man, alpha-1,2-linked mannotriose, and Man(alpha-1,6)Glc, in order of decreasing potency. Weakly inhibited by elsinotetraose. Not inhibited by maltose or nigerose. D-mannose-binding lectin which binds alpha-D-linked mannose. Displays a high affinity for alpha-(1-6)-mannose oligomers. Able to interact with both terminal and internal alpha-D-mannosyl residues. Displays antiviral activity and therefore may contribute to defense against infections. The sequence is that of Mannose-specific lectin from Narcissus pseudonarcissus (Daffodil).